The chain runs to 441 residues: Probable indole-3-acetic acid-amido synthetase GH3.9 (441 aa).

Belongs to the IAA-amido conjugating enzyme family. As to expression, expressed in etiolated seedlings and roots.

Its function is as follows. May catalyze the synthesis of indole-3-acetic acid (IAA)-amino acid conjugates, providing a mechanism for the plant to cope with the presence of excess auxin. The chain is Probable indole-3-acetic acid-amido synthetase GH3.9 (GH3.9) from Oryza sativa subsp. japonica (Rice).